The following is a 261-amino-acid chain: Proliferating cell nuclear antigen (261 aa).

N6-acetyllysine occurs at positions 14, 77, and 80. A DNA-binding region spans residues arginine 61–lysine 80. An intrachain disulfide couples cysteine 135 to cysteine 162. Lysine 164 is covalently cross-linked (Glycyl lysine isopeptide (Lys-Gly) (interchain with G-Cter in SUMO2); alternate). Lysine 164 is covalently cross-linked (Glycyl lysine isopeptide (Lys-Gly) (interchain with G-Cter in ubiquitin); alternate). Tyrosine 211 carries the post-translational modification Phosphotyrosine; by EGFR. Lysine 248 is modified (N6-acetyllysine). Lysine 254 participates in a covalent cross-link: Glycyl lysine isopeptide (Lys-Gly) (interchain with G-Cter in SUMO2).

The protein belongs to the PCNA family. As to quaternary structure, homotrimer. Interacts with p300/EP300; the interaction occurs on chromatin in UV-irradiated damaged cells. Interacts with CREBBP (via transactivation domain and C-terminus); the interaction occurs on chromatin in UV-irradiated damaged cells. Directly interacts with POLD1, POLD3 and POLD4 subunits of the DNA polymerase delta complex, POLD3 being the major interacting partner; the interaction with POLD3 is inhibited by CDKN1A/p21(CIP1). Forms a complex with activator 1 heteropentamer in the presence of ATP. Interacts with EXO1, POLH, POLK, DNMT1, ERCC5, FEN1, CDC6 and POLDIP2. Interacts with POLB. Interacts with APEX2; this interaction is triggered by reactive oxygen species and increased by misincorporation of uracil in nuclear DNA. Forms a ternary complex with DNTTIP2 and core histone. Interacts with KCTD10 and PPP1R15A. Interacts with SMARCA5/SNF2H. Interacts with BAZ1B/WSTF; the interaction is direct and is required for BAZ1B/WSTF binding to replication foci during S phase. Interacts with HLTF and SHPRH. Interacts with NUDT15; this interaction is disrupted in response to UV irradiation and acetylation. Interacts with CDKN1A/p21(CIP1) and CDT1; interacts via their PIP-box which also recruits the DCX(DTL) complex. The interaction with CDKN1A inhibits POLD3 binding. Interacts with DDX11. Interacts with EGFR; positively regulates PCNA. Interacts with PARPBP. Interacts (when ubiquitinated) with SPRTN; leading to enhance RAD18-mediated PCNA ubiquitination. Interacts (when polyubiquitinated) with ZRANB3. Interacts with SMARCAD1. Interacts with CDKN1C. Interacts with PCLAF (via PIP-box). Interacts with RTEL1 (via PIP-box); the interaction is direct and essential for the suppression of telomere fragility. Interacts with FAM111A (via PIP-box); the interaction is direct and required for PCNA loading on chromatin binding. Interacts with LIG1. Interacts with SETMAR. Interacts with ANKRD17. Interacts with FBXO18/FBH1 (via PIP-box); the interaction recruits the DCX(DTL) complex and promotes ubiquitination and degradation of FBXO18/FBH1. Interacts with POLN. Interacts with SDE2 (via PIP-box); the interaction is direct and prevents ultraviolet light induced monoubiquitination. Component of the replisome complex composed of at least DONSON, MCM2, MCM7, PCNA and TICRR; interaction at least with PCNA occurs during DNA replication. Interacts with MAPK15; the interaction is chromatin binding dependent and prevents MDM2-mediated PCNA destruction by inhibiting the association of PCNA with MDM2. Interacts with PARP10 (via PIP-box). Interacts with DDI2. Interacts with HMCES (via PIP-box). Interacts with TRAIP (via PIP-box). Interacts with UHRF2. Interacts with ALKBH2; this interaction is enhanced during the S-phase of the cell cycle. Interacts with ATAD5; the interaction promotes USP1-mediated PCNA deubiquitination. Interacts (when phosphorylated) with GRB2. Interacts with ANG. Interacts with nuclear UNG; this interaction mediates UNG recruitment to S-phase replication foci. Interacts with ERCC6L2 (via an atypical PIP-box); this interaction facilitates cenrtomeric localization of ERCC6L2. In terms of processing, phosphorylated. Phosphorylation at Tyr-211 by EGFR stabilizes chromatin-associated PCNA. Post-translationally, acetylated by CREBBP and p300/EP300; preferentially acetylated by CREBBP on Lys-80, Lys-13 and Lys-14 and on Lys-77 by p300/EP300 upon loading on chromatin in response to UV irradiation. Lysine acetylation disrupts association with chromatin, hence promoting PCNA ubiquitination and proteasomal degradation in response to UV damage in a CREBBP- and EP300-dependent manner. Acetylation disrupts interaction with NUDT15 and promotes degradation. Ubiquitinated. Following DNA damage, can be either monoubiquitinated to stimulate direct bypass of DNA lesions by specialized DNA polymerases or polyubiquitinated to promote recombination-dependent DNA synthesis across DNA lesions by template switching mechanisms. Following induction of replication stress, monoubiquitinated by the UBE2B-RAD18 complex on Lys-164, leading to recruit translesion (TLS) polymerases, which are able to synthesize across DNA lesions in a potentially error-prone manner. An error-free pathway also exists and requires non-canonical polyubiquitination on Lys-164 through 'Lys-63' linkage of ubiquitin moieties by the E2 complex UBE2N-UBE2V2 and the E3 ligases, HLTF, RNF8 and SHPRH. This error-free pathway, also known as template switching, employs recombination mechanisms to synthesize across the lesion, using as a template the undamaged, newly synthesized strand of the sister chromatid. Monoubiquitination at Lys-164 also takes place in undamaged proliferating cells, and is mediated by the DCX(DTL) complex, leading to enhance PCNA-dependent translesion DNA synthesis. Sumoylated during S phase. In terms of processing, methylated on glutamate residues by ARMT1.

It localises to the nucleus. Auxiliary protein of DNA polymerase delta and epsilon, is involved in the control of eukaryotic DNA replication by increasing the polymerase's processibility during elongation of the leading strand. Induces a robust stimulatory effect on the 3'-5' exonuclease and 3'-phosphodiesterase, but not apurinic-apyrimidinic (AP) endonuclease, APEX2 activities. Has to be loaded onto DNA in order to be able to stimulate APEX2. Plays a key role in DNA damage response (DDR) by being conveniently positioned at the replication fork to coordinate DNA replication with DNA repair and DNA damage tolerance pathways. Acts as a loading platform to recruit DDR proteins that allow completion of DNA replication after DNA damage and promote postreplication repair: Monoubiquitinated PCNA leads to recruitment of translesion (TLS) polymerases, while 'Lys-63'-linked polyubiquitination of PCNA is involved in error-free pathway and employs recombination mechanisms to synthesize across the lesion. The sequence is that of Proliferating cell nuclear antigen (PCNA) from Cricetulus griseus (Chinese hamster).